The sequence spans 430 residues: RNA polymerase-associated protein LEO1 (430 aa).

Positions 1–10 (MSSSEGNSDA) are enriched in polar residues. The interval 1–128 (MSSSEGNSDA…SRGSLNDLQG (128 aa)) is disordered. Residues 18–30 (KSSTPSSRGSSPD) show a composition bias toward low complexity. The segment covering 99–119 (REGKPKESNTRARLSDSDAES) has biased composition (basic and acidic residues). 2 coiled-coil regions span residues 326–347 (TRRE…RTQM) and 409–429 (EEYR…DEES). A disordered region spans residues 349–430 (RNNFKVRGPR…QIVTSDEESD (82 aa)).

The protein belongs to the LEO1 family. In terms of assembly, component of the PAF1 complex which consists of at least cdc-73, ctr-9, leo-1, pafo-1 and rtfo-1.

It localises to the nucleus. The protein resides in the cytoplasm. Its function is as follows. Component of the PAF1 complex which is a multifunctional complex involved in transcription initiation via genetic interactions with TATA-binding proteins, elongation and transcription-coupled histone modification. In Caenorhabditis elegans, this protein is RNA polymerase-associated protein LEO1.